The chain runs to 1177 residues: Putative ATP-dependent RNA helicase TDRD12 (1177 aa).

The 63-residue stretch at 56 to 118 (TLEEGQVCVV…RVVVESFMQL (63 aa)) folds into the Tudor 1 domain. Positions 447–635 (WPPIARGCDV…KEFMNDPYIV (189 aa)) constitute a Helicase ATP-binding domain. An ATP-binding site is contributed by 460 to 467 (SHCESNPL). The short motif at 574 to 577 (DEVE) is the DEAH box element. One can recognise a Tudor 2 domain in the interval 900–999 (IVDKHMDLYA…HTLPPQAVEF (100 aa)). The disordered stretch occupies residues 1098–1177 (EESLSQTPPR…VFKRWLSSNR (80 aa)). Positions 1100–1115 (SLSQTPPRVTGTSPAQ) are enriched in polar residues.

In terms of assembly, component of a mRNP complex containing PIWIL2, TDRD1 and piRNAs. Component of the PET complex, at least composed of EXD1, PIWIL2, TDRD12 and piRNAs.

The catalysed reaction is ATP + H2O = ADP + phosphate + H(+). Its function is as follows. Probable ATP-binding RNA helicase required during spermatogenesis to repress transposable elements and preventing their mobilization, which is essential for the germline integrity. Acts via the piRNA metabolic process, which mediates the repression of transposable elements during meiosis by forming complexes composed of piRNAs and Piwi proteins and governs the methylation and subsequent repression of transposons. Involved in the secondary piRNAs metabolic process. Acts via the PET complex, a multiprotein complex required during the secondary piRNAs metabolic process for the PIWIL2 slicing-triggered loading of PIWIL4 piRNAs. The sequence is that of Putative ATP-dependent RNA helicase TDRD12 (TDRD12) from Homo sapiens (Human).